A 78-amino-acid polypeptide reads, in one-letter code: ATP synthase subunit c (78 aa).

The next 2 helical transmembrane spans lie at 12–32 and 54–74; these read IGAGLACTGMGGAAVGVGHVV and FIGIAFAEALGIFSFLVALLL.

The protein belongs to the ATPase C chain family. As to quaternary structure, F-type ATPases have 2 components, F(1) - the catalytic core - and F(0) - the membrane proton channel. F(1) has five subunits: alpha(3), beta(3), gamma(1), delta(1), epsilon(1). F(0) has four main subunits: a(1), b(1), b'(1) and c(10-14). The alpha and beta chains form an alternating ring which encloses part of the gamma chain. F(1) is attached to F(0) by a central stalk formed by the gamma and epsilon chains, while a peripheral stalk is formed by the delta, b and b' chains.

The protein localises to the cellular chromatophore membrane. In terms of biological role, f(1)F(0) ATP synthase produces ATP from ADP in the presence of a proton or sodium gradient. F-type ATPases consist of two structural domains, F(1) containing the extramembraneous catalytic core and F(0) containing the membrane proton channel, linked together by a central stalk and a peripheral stalk. During catalysis, ATP synthesis in the catalytic domain of F(1) is coupled via a rotary mechanism of the central stalk subunits to proton translocation. Its function is as follows. Key component of the F(0) channel; it plays a direct role in translocation across the membrane. A homomeric c-ring of between 10-14 subunits forms the central stalk rotor element with the F(1) delta and epsilon subunits. The sequence is that of ATP synthase subunit c from Rhodobacter capsulatus (Rhodopseudomonas capsulata).